We begin with the raw amino-acid sequence, 236 residues long: Probable chemoreceptor glutamine deamidase CheD (236 aa).

The tract at residues 1–20 (MIEFGKRATPQSAADAVRGD) is disordered.

This sequence belongs to the CheD family.

It carries out the reaction L-glutaminyl-[protein] + H2O = L-glutamyl-[protein] + NH4(+). Functionally, probably deamidates glutamine residues to glutamate on methyl-accepting chemotaxis receptors (MCPs), playing an important role in chemotaxis. The sequence is that of Probable chemoreceptor glutamine deamidase CheD from Ralstonia pickettii (strain 12J).